The sequence spans 356 residues: Malate dehydrogenase, glyoxysomal (356 aa).

A glyoxysome-targeting transit peptide spans 1 to 36 (MEDAAAAARRMERLASHLRPPASQMEESPLLRGSNC). NAD(+) is bound by residues 51 to 57 (GASGGIG) and D77. Substrate is bound by residues R124 and R130. NAD(+)-binding positions include N137 and 160–162 (ISN). N162 and R196 together coordinate substrate. H220 functions as the Proton acceptor in the catalytic mechanism. M271 contacts NAD(+).

The protein belongs to the LDH/MDH superfamily. MDH type 1 family. Homodimer.

Its subcellular location is the glyoxysome. It carries out the reaction (S)-malate + NAD(+) = oxaloacetate + NADH + H(+). This chain is Malate dehydrogenase, glyoxysomal, found in Oryza sativa subsp. japonica (Rice).